We begin with the raw amino-acid sequence, 353 residues long: Photosystem II D2 protein (353 aa).

Thr-2 bears the N-acetylthreonine mark. Thr-2 bears the Phosphothreonine mark. A helical transmembrane segment spans residues 41 to 61 (CAYFALGGWFTGTTFVTSWYT). Position 118 (His-118) interacts with chlorophyll a. The helical transmembrane segment at 125 to 141 (GFMLRQFELARSVQLRP) threads the bilayer. Residues Gln-130 and Asn-143 each coordinate pheophytin a. A helical transmembrane segment spans residues 153 to 166 (VFVSVFLIYPLGQS). A chlorophyll a-binding site is contributed by His-198. Residues 208–228 (AALLCAIHGATVENTLFEDGD) traverse the membrane as a helical segment. A plastoquinone contacts are provided by His-215 and Phe-262. Fe cation is bound at residue His-215. His-269 is a binding site for Fe cation. A helical transmembrane segment spans residues 279–295 (GLWMSAIGVVGLALNLR).

This sequence belongs to the reaction center PufL/M/PsbA/D family. In terms of assembly, PSII is composed of 1 copy each of membrane proteins PsbA, PsbB, PsbC, PsbD, PsbE, PsbF, PsbH, PsbI, PsbJ, PsbK, PsbL, PsbM, PsbT, PsbX, PsbY, PsbZ, Psb30/Ycf12, at least 3 peripheral proteins of the oxygen-evolving complex and a large number of cofactors. It forms dimeric complexes. The D1/D2 heterodimer binds P680, chlorophylls that are the primary electron donor of PSII, and subsequent electron acceptors. It shares a non-heme iron and each subunit binds pheophytin, quinone, additional chlorophylls, carotenoids and lipids. There is also a Cl(-1) ion associated with D1 and D2, which is required for oxygen evolution. The PSII complex binds additional chlorophylls, carotenoids and specific lipids. serves as cofactor.

It is found in the plastid. The protein localises to the chloroplast thylakoid membrane. It catalyses the reaction 2 a plastoquinone + 4 hnu + 2 H2O = 2 a plastoquinol + O2. Functionally, photosystem II (PSII) is a light-driven water:plastoquinone oxidoreductase that uses light energy to abstract electrons from H(2)O, generating O(2) and a proton gradient subsequently used for ATP formation. It consists of a core antenna complex that captures photons, and an electron transfer chain that converts photonic excitation into a charge separation. The D1/D2 (PsbA/PsbD) reaction center heterodimer binds P680, the primary electron donor of PSII as well as several subsequent electron acceptors. D2 is needed for assembly of a stable PSII complex. In Cycas taitungensis (Prince sago), this protein is Photosystem II D2 protein.